A 156-amino-acid polypeptide reads, in one-letter code: Small ribosomal subunit protein uS7 (156 aa).

Belongs to the universal ribosomal protein uS7 family. In terms of assembly, part of the 30S ribosomal subunit. Contacts proteins S9 and S11.

Its function is as follows. One of the primary rRNA binding proteins, it binds directly to 16S rRNA where it nucleates assembly of the head domain of the 30S subunit. Is located at the subunit interface close to the decoding center, probably blocks exit of the E-site tRNA. In Carsonella ruddii, this protein is Small ribosomal subunit protein uS7.